The following is a 207-amino-acid chain: Large ribosomal subunit protein uL4 (207 aa).

The segment at 50-75 (KTKTVSEVSGTTKKPFKQKGTGNARQ) is disordered.

It belongs to the universal ribosomal protein uL4 family. In terms of assembly, part of the 50S ribosomal subunit.

Functionally, one of the primary rRNA binding proteins, this protein initially binds near the 5'-end of the 23S rRNA. It is important during the early stages of 50S assembly. It makes multiple contacts with different domains of the 23S rRNA in the assembled 50S subunit and ribosome. Its function is as follows. Forms part of the polypeptide exit tunnel. The chain is Large ribosomal subunit protein uL4 from Rickettsia felis (strain ATCC VR-1525 / URRWXCal2) (Rickettsia azadi).